The sequence spans 238 residues: Laccase-S (238 aa).

Plastocyanin-like domains lie at 4 to 87 (NVIA…YDPA) and 100 to 238 (HTII…IARY). A glycan (N-linked (GlcNAc...) asparagine) is linked at Asn8. 4 residues coordinate Cu cation: His21, His23, His66, and His68. A disulfide bridge connects residues Cys74 and Cys162. Asn165 is a glycosylation site (N-linked (GlcNAc...) asparagine).

It belongs to the multicopper oxidase family. As to quaternary structure, monomer. Cu cation is required as a cofactor.

It is found in the secreted. The catalysed reaction is 4 hydroquinone + O2 = 4 benzosemiquinone + 2 H2O. With respect to regulation, activity is strongly promoted by toluene. Activity is promoted by magnesium, potassium, cadmium, zinc, nickel, sodium, lead and manganese ions. Completely inhibited by IAA (cysteine protease inhibitor), PMSF (serine protease inhibitor), DEP (histidine protease inhibitor) and NAI (tyrosine protease inhibitor). Inhibited by ethanol, acetone, SDS, and EDTA. Activity is strongly inhibited by mercury ions. Also inhibited by lithium, aluminum, calcium, barium and iron ions. In terms of biological role, lignin degradation and detoxification of lignin-derived products. Has activity towards 2,2'-azino-bis(3-ethylbenzothiazoline-6-sulfonic acid) (ABTS). In Trametes hirsuta (White-rot fungus), this protein is Laccase-S.